Here is a 548-residue protein sequence, read N- to C-terminus: Chaperonin GroEL (548 aa).

ATP-binding positions include 30–33 (TLGP), K51, 87–91 (DGTTT), G415, 479–481 (NAA), and D495.

The protein belongs to the chaperonin (HSP60) family. As to quaternary structure, forms a cylinder of 14 subunits composed of two heptameric rings stacked back-to-back. Interacts with the co-chaperonin GroES.

It is found in the cytoplasm. It catalyses the reaction ATP + H2O + a folded polypeptide = ADP + phosphate + an unfolded polypeptide.. Functionally, together with its co-chaperonin GroES, plays an essential role in assisting protein folding. The GroEL-GroES system forms a nano-cage that allows encapsulation of the non-native substrate proteins and provides a physical environment optimized to promote and accelerate protein folding. This Klebsiella pneumoniae (strain 342) protein is Chaperonin GroEL.